A 230-amino-acid polypeptide reads, in one-letter code: Cytidylate kinase (230 aa).

12 to 20 (GPSGAGKGT) lines the ATP pocket.

The protein belongs to the cytidylate kinase family. Type 1 subfamily.

It localises to the cytoplasm. It carries out the reaction CMP + ATP = CDP + ADP. The enzyme catalyses dCMP + ATP = dCDP + ADP. This chain is Cytidylate kinase, found in Shewanella baltica (strain OS223).